The chain runs to 710 residues: Polyribonucleotide nucleotidyltransferase (710 aa).

2 residues coordinate Mg(2+): D501 and D507. Residues 568 to 628 form the KH domain; it reads PKVQMFQIKP…ETVKQAILFI (61 aa). The 73-residue stretch at 638 to 710 folds into the S1 motif domain; that stretch reads NSIYHAHISR…RIDFVLISKK (73 aa).

Belongs to the polyribonucleotide nucleotidyltransferase family. Mg(2+) serves as cofactor.

It is found in the cytoplasm. It catalyses the reaction RNA(n+1) + phosphate = RNA(n) + a ribonucleoside 5'-diphosphate. In terms of biological role, involved in mRNA degradation. Catalyzes the phosphorolysis of single-stranded polyribonucleotides processively in the 3'- to 5'-direction. This Phytoplasma australiense protein is Polyribonucleotide nucleotidyltransferase.